A 122-amino-acid chain; its full sequence is Large ribosomal subunit protein uL14 (122 aa).

This sequence belongs to the universal ribosomal protein uL14 family. As to quaternary structure, part of the 50S ribosomal subunit. Forms a cluster with proteins L3 and L19. In the 70S ribosome, L14 and L19 interact and together make contacts with the 16S rRNA in bridges B5 and B8.

Functionally, binds to 23S rRNA. Forms part of two intersubunit bridges in the 70S ribosome. The polypeptide is Large ribosomal subunit protein uL14 (Bartonella bacilliformis (strain ATCC 35685 / KC583 / Herrer 020/F12,63)).